The following is a 168-amino-acid chain: SPbeta prophage-derived uncharacterized protein YomW (168 aa).

The chain is SPbeta prophage-derived uncharacterized protein YomW (yomW) from Bacillus subtilis (strain 168).